The sequence spans 400 residues: Acetate kinase (400 aa).

N10 contributes to the Mg(2+) binding site. An ATP-binding site is contributed by K17. R91 is a substrate binding site. D150 acts as the Proton donor/acceptor in catalysis. Residues 210–214 (HLGNG), 285–287 (DCR), and 333–337 (GIGEN) each bind ATP. E387 contributes to the Mg(2+) binding site.

This sequence belongs to the acetokinase family. In terms of assembly, homodimer. The cofactor is Mg(2+). Mn(2+) is required as a cofactor.

It localises to the cytoplasm. It catalyses the reaction acetate + ATP = acetyl phosphate + ADP. It participates in metabolic intermediate biosynthesis; acetyl-CoA biosynthesis; acetyl-CoA from acetate: step 1/2. In terms of biological role, catalyzes the formation of acetyl phosphate from acetate and ATP. Can also catalyze the reverse reaction. This is Acetate kinase from Erwinia tasmaniensis (strain DSM 17950 / CFBP 7177 / CIP 109463 / NCPPB 4357 / Et1/99).